Here is a 309-residue protein sequence, read N- to C-terminus: uncharacterized protein (309 aa).

The RPE1 insert domain occupies 9-55 (NFLYNIANKDGFKGYKECRTSAYKNVFDDSSTKSTSKFHLGISDTKN). Residues 62 to 82 (IIGLILIIFAGVLFYAYILQH) traverse the membrane as a helical segment.

It belongs to the LicD transferase family.

The protein localises to the membrane. This is an uncharacterized protein from Rickettsia typhi (strain ATCC VR-144 / Wilmington).